A 582-amino-acid chain; its full sequence is Protein alan shepard (582 aa).

Pro residues predominate over residues 1–12 (MHPRYSPAPPPQ). Positions 1 to 73 (MHPRYSPAPP…AAPPTSRSAF (73 aa)) are disordered. Position 5 is a phosphotyrosine (Tyr5). The segment covering 13 to 24 (QQQQMGGPLHQQ) has biased composition (low complexity). Residues 25–36 (QGGGGGGGGGIR) show a composition bias toward gly residues. The span at 39-57 (SNAQQLPPQIPRSQNYSNG) shows a compositional bias: polar residues. Low complexity predominate over residues 58-72 (SSSSAAAAPPTSRSA). Residues Tyr125 and Tyr142 each carry the phosphotyrosine modification. The tract at residues 164–225 (PATTTYGQRV…TVQNQNQQGG (62 aa)) is disordered. Residues 178 to 225 (SPSNTNSSSSSNTGSQSGTLSTSLSNTTNTNTNMGPNGTVQNQNQQGG) are compositionally biased toward low complexity. RRM domains lie at 231–304 (TNLY…MAKQ) and 310–389 (TNLY…FADG). Residues 555 to 582 (PMTDSEQASTAASPDEAYTQYPHQAAPK) form a disordered region.

In terms of biological role, has a role in the perception of gravity. The chain is Protein alan shepard from Drosophila yakuba (Fruit fly).